The primary structure comprises 181 residues: Probable pyruvoyl-dependent arginine decarboxylase (181 aa).

Position 43 is a pyruvic acid (Ser) (S43).

This sequence belongs to the PdaD family. Requires pyruvate as cofactor.

The enzyme catalyses L-arginine + H(+) = agmatine + CO2. The protein is Probable pyruvoyl-dependent arginine decarboxylase of Chlorobaculum parvum (strain DSM 263 / NCIMB 8327) (Chlorobium vibrioforme subsp. thiosulfatophilum).